The following is a 118-amino-acid chain: Beta-2-microglobulin (118 aa).

An N-terminal signal peptide occupies residues 1-21 (MGSRWGIAVLGLFCFVSCLEA). Residues 26–113 (PKIQVYSRHP…VHEGVKKTVK (88 aa)) form the Ig-like C1-type domain. The cysteines at positions 46 and 101 are disulfide-linked.

The protein belongs to the beta-2-microglobulin family. In terms of assembly, heterodimer of an alpha chain and a beta chain. Beta-2-microglobulin is the beta-chain of major histocompatibility complex class I molecules.

The protein resides in the secreted. Component of the class I major histocompatibility complex (MHC). Involved in the presentation of peptide antigens to the immune system. In Ornithorhynchus anatinus (Duckbill platypus), this protein is Beta-2-microglobulin (B2M).